A 491-amino-acid polypeptide reads, in one-letter code: DEAD-box ATP-dependent RNA helicase 36 (491 aa).

A compositionally biased stretch (acidic residues) spans Met-1–Gly-10. The segment at Met-1–Ser-56 is disordered. Polar residues predominate over residues Thr-24 to Ser-56. A Q motif motif is present at residues Thr-58–Thr-86. The region spanning Val-89–Tyr-262 is the Helicase ATP-binding domain. Ala-102–Thr-109 is a binding site for ATP. The DEAD box signature appears at Asp-210–Asp-213. Residues Tyr-289–Glu-438 enclose the Helicase C-terminal domain. The interval Lys-471–Asn-491 is disordered. Residues Leu-479–Asn-491 are compositionally biased toward basic residues.

This sequence belongs to the DEAD box helicase family. DDX49/DBP8 subfamily.

The enzyme catalyses ATP + H2O = ADP + phosphate + H(+). The polypeptide is DEAD-box ATP-dependent RNA helicase 36 (RH36) (Arabidopsis thaliana (Mouse-ear cress)).